The following is a 549-amino-acid chain: Efflux pump patC (549 aa).

The segment covering 1–12 (MAESTAHTSPSL) has biased composition (polar residues). The disordered stretch occupies residues 1-40 (MAESTAHTSPSLNDKEREVDQGILSDESGPAEEVKETPDQ). Transmembrane regions (helical) follow at residues 50-70 (LLIC…NTIV), 85-105 (AQLG…ILPL), 116-136 (WLFI…GGAP), 146-166 (VWAG…ITIL), 178-198 (LVGL…GAFA), 206-226 (WGFY…VFLL), 252-272 (VLSA…GVMW), 282-302 (LYVV…FCVL), 321-341 (IALY…VYYI), 360-380 (LLPF…LMPK), 385-405 (VLWY…MYTV), 419-439 (ILLG…PSLV), 460-482 (LLGL…NALL), and 526-546 (VYVM…FLPW).

The protein belongs to the major facilitator superfamily. TCR/Tet family.

The protein localises to the vacuole membrane. It localises to the cell membrane. Efflux pump; part of the gene cluster that mediates the biosynthesis of patulin, an acetate-derived tetraketide mycotoxin produced by several fungal species that shows antimicrobial properties against several bacteria. May be involved in the secretion of E-ascladiol to be converted to patulin by the secreted patulin synthase patE. The sequence is that of Efflux pump patC from Aspergillus clavatus (strain ATCC 1007 / CBS 513.65 / DSM 816 / NCTC 3887 / NRRL 1 / QM 1276 / 107).